Consider the following 488-residue polypeptide: 3-octaprenyl-4-hydroxybenzoate carboxy-lyase (488 aa).

Asn172 contributes to the Mn(2+) binding site. Residues 175 to 177 (IYR), 189 to 191 (RWL), and 194 to 195 (RG) each bind prenylated FMN. Glu238 is a Mn(2+) binding site. Asp287 functions as the Proton donor in the catalytic mechanism.

Belongs to the UbiD family. In terms of assembly, homohexamer. It depends on prenylated FMN as a cofactor. Requires Mn(2+) as cofactor.

The protein resides in the cell membrane. It carries out the reaction a 4-hydroxy-3-(all-trans-polyprenyl)benzoate + H(+) = a 2-(all-trans-polyprenyl)phenol + CO2. It participates in cofactor biosynthesis; ubiquinone biosynthesis. Catalyzes the decarboxylation of 3-octaprenyl-4-hydroxy benzoate to 2-octaprenylphenol, an intermediate step in ubiquinone biosynthesis. The protein is 3-octaprenyl-4-hydroxybenzoate carboxy-lyase of Legionella pneumophila subsp. pneumophila (strain Philadelphia 1 / ATCC 33152 / DSM 7513).